Reading from the N-terminus, the 157-residue chain is Galactose-specific lectin (157 aa).

Residues Ser-12–Leu-157 form the Jacalin-type lectin domain. The N-linked (GlcNAc...) asparagine glycan is linked to Asn-45.

It belongs to the jacalin lectin family. In terms of assembly, tetramer of heterodimers of light and heavy chains which are non-covalently linked. In terms of processing, N-linked carbohydrates at Asn-45 can be of complex or paucimannose type.

Its function is as follows. Alpha-D-galactose-specific lectin. Has hemagglutinating activity towards human and rabbit erythrocytes. Is highly cytotoxic to human cells in vitro. The protein is Galactose-specific lectin of Morus indica (Mulberry).